Here is a 376-residue protein sequence, read N- to C-terminus: Acetylornithine aminotransferase (376 aa).

Residues 96–97 (GT) and Phe128 contribute to the pyridoxal 5'-phosphate site. N(2)-acetyl-L-ornithine is bound at residue Arg131. 213–216 (DEVQ) contributes to the pyridoxal 5'-phosphate binding site. Position 242 is an N6-(pyridoxal phosphate)lysine (Lys242). Ser270 provides a ligand contact to N(2)-acetyl-L-ornithine. A pyridoxal 5'-phosphate-binding site is contributed by Thr271.

It belongs to the class-III pyridoxal-phosphate-dependent aminotransferase family. ArgD subfamily. In terms of assembly, homodimer. Requires pyridoxal 5'-phosphate as cofactor.

The protein localises to the cytoplasm. It carries out the reaction N(2)-acetyl-L-ornithine + 2-oxoglutarate = N-acetyl-L-glutamate 5-semialdehyde + L-glutamate. The protein operates within amino-acid biosynthesis; L-arginine biosynthesis; N(2)-acetyl-L-ornithine from L-glutamate: step 4/4. The chain is Acetylornithine aminotransferase from Aquifex aeolicus (strain VF5).